A 307-amino-acid chain; its full sequence is Aspartate carbamoyltransferase catalytic subunit (307 aa).

Carbamoyl phosphate contacts are provided by arginine 56 and threonine 57. Lysine 84 is an L-aspartate binding site. Residues arginine 106, histidine 136, and glutamine 139 each coordinate carbamoyl phosphate. Arginine 169 and arginine 221 together coordinate L-aspartate. Carbamoyl phosphate-binding residues include alanine 262 and proline 263.

It belongs to the aspartate/ornithine carbamoyltransferase superfamily. ATCase family. In terms of assembly, heterododecamer (2C3:3R2) of six catalytic PyrB chains organized as two trimers (C3), and six regulatory PyrI chains organized as three dimers (R2).

It catalyses the reaction carbamoyl phosphate + L-aspartate = N-carbamoyl-L-aspartate + phosphate + H(+). It functions in the pathway pyrimidine metabolism; UMP biosynthesis via de novo pathway; (S)-dihydroorotate from bicarbonate: step 2/3. Its function is as follows. Catalyzes the condensation of carbamoyl phosphate and aspartate to form carbamoyl aspartate and inorganic phosphate, the committed step in the de novo pyrimidine nucleotide biosynthesis pathway. The sequence is that of Aspartate carbamoyltransferase catalytic subunit from Streptococcus pneumoniae (strain P1031).